Here is a 329-residue protein sequence, read N- to C-terminus: Putative 1-aminocyclopropane-1-carboxylate deaminase (329 aa).

Residue K54 is modified to N6-(pyridoxal phosphate)lysine.

It belongs to the ACC deaminase/D-cysteine desulfhydrase family. Pyridoxal 5'-phosphate serves as cofactor.

The enzyme catalyses 1-aminocyclopropane-1-carboxylate + H2O = 2-oxobutanoate + NH4(+). The sequence is that of Putative 1-aminocyclopropane-1-carboxylate deaminase from Pyrococcus furiosus (strain ATCC 43587 / DSM 3638 / JCM 8422 / Vc1).